Here is a 288-residue protein sequence, read N- to C-terminus: Protease HtpX homolog (288 aa).

2 helical membrane passes run threonine 6–glycine 26 and glutamine 28–serine 48. Histidine 130 lines the Zn(2+) pocket. The active site involves glutamate 131. Histidine 134 contacts Zn(2+). 2 helical membrane passes run isoleucine 140 to alanine 160 and valine 179 to isoleucine 199. Glutamate 204 contacts Zn(2+).

It belongs to the peptidase M48B family. Requires Zn(2+) as cofactor.

It localises to the cell inner membrane. This Campylobacter concisus (strain 13826) protein is Protease HtpX homolog.